A 100-amino-acid polypeptide reads, in one-letter code: MIPLTHGLILAAILFVLGLTGLVIRRNLLFMLISLEIMINAAALAFVVAGSYWGQADGQIMYILAISLAAAEASIGLALLLQLHRRRQNLNIDSVSELRG.

3 helical membrane-spanning segments follow: residues 4 to 24, 28 to 48, and 60 to 80; these read LTHG…GLVI, LLFM…AFVV, and IMYI…LALL.

This sequence belongs to the complex I subunit 4L family. NDH-1 is composed of 13 different subunits. Subunits NuoA, H, J, K, L, M, N constitute the membrane sector of the complex.

The protein localises to the cell inner membrane. It carries out the reaction a quinone + NADH + 5 H(+)(in) = a quinol + NAD(+) + 4 H(+)(out). In terms of biological role, NDH-1 shuttles electrons from NADH, via FMN and iron-sulfur (Fe-S) centers, to quinones in the respiratory chain. The immediate electron acceptor for the enzyme in this species is believed to be ubiquinone. Couples the redox reaction to proton translocation (for every two electrons transferred, four hydrogen ions are translocated across the cytoplasmic membrane), and thus conserves the redox energy in a proton gradient. The chain is NADH-quinone oxidoreductase subunit K from Klebsiella pneumoniae (strain 342).